The sequence spans 575 residues: MPTTDSARAADIKQPDIKPRSRDVTDGLEKAAARGMLRAVGMGDEDFAKPQIGVASSWNEITPCNLSLDRLAKAVKEGVFAAGGYPLEFGTISVSDGISMGHEGMHFSLVSREVIADSVETVMQAERLDGSVLLAGCDKSLPGMLMAAARLDLASVFLYAGSILPGVAKLSDGSEREVTIIDAFEAVGACARGLMPREDVDAIERAICPGEGACGGMYTANTMASAAEALGMSLPGSAAPPATDRRRDGFARRSGQAVVELLRRGITARDILTKEAFENAIAVVMAFGGSTNAVLHLLAIAHEADVALSLDDFSRIGSKVPHLADVKPFGRHVMTDVDHIGGVPVMMKALLDAGLLNGDCLTVTGATVAQNLAAIAPPDPDGKVLRALSDPLHPTGGITILRGSLAPEGAVVKSAGFDSDVFEGTARVFDGERAALDALEDGTITKGDAVVIRYEGPKGGPGMREMLAITGAIKGAGLGKDVLLLTDGRFSGGTTGLCVGHIAPEAVDAGPIAFLRDGDRIRLDVANRVLDVLVDPAEFDSRRTGFTPPPPRYKTGVLAKYVKLVGSAAIGAVCG.

Residues 1-25 (MPTTDSARAADIKQPDIKPRSRDVT) form a disordered region. Residues 8 to 25 (RAADIKQPDIKPRSRDVT) are compositionally biased toward basic and acidic residues. Cys-64 contributes to the [2Fe-2S] cluster binding site. Asp-96 lines the Mg(2+) pocket. Cys-137 contributes to the [2Fe-2S] cluster binding site. 2 residues coordinate Mg(2+): Asp-138 and Lys-139. Lys-139 bears the N6-carboxylysine mark. Cys-214 contacts [2Fe-2S] cluster. Glu-465 serves as a coordination point for Mg(2+). Ser-491 serves as the catalytic Proton acceptor.

The protein belongs to the IlvD/Edd family. In terms of assembly, homodimer. Requires [2Fe-2S] cluster as cofactor. Mg(2+) is required as a cofactor.

The catalysed reaction is (2R)-2,3-dihydroxy-3-methylbutanoate = 3-methyl-2-oxobutanoate + H2O. The enzyme catalyses (2R,3R)-2,3-dihydroxy-3-methylpentanoate = (S)-3-methyl-2-oxopentanoate + H2O. It functions in the pathway amino-acid biosynthesis; L-isoleucine biosynthesis; L-isoleucine from 2-oxobutanoate: step 3/4. It participates in amino-acid biosynthesis; L-valine biosynthesis; L-valine from pyruvate: step 3/4. In terms of biological role, functions in the biosynthesis of branched-chain amino acids. Catalyzes the dehydration of (2R,3R)-2,3-dihydroxy-3-methylpentanoate (2,3-dihydroxy-3-methylvalerate) into 2-oxo-3-methylpentanoate (2-oxo-3-methylvalerate) and of (2R)-2,3-dihydroxy-3-methylbutanoate (2,3-dihydroxyisovalerate) into 2-oxo-3-methylbutanoate (2-oxoisovalerate), the penultimate precursor to L-isoleucine and L-valine, respectively. This Mycolicibacterium paratuberculosis (strain ATCC BAA-968 / K-10) (Mycobacterium paratuberculosis) protein is Dihydroxy-acid dehydratase.